We begin with the raw amino-acid sequence, 502 residues long: Putative F-box/FBD/LRR-repeat protein At5g22610 (502 aa).

An F-box domain is found at 17–63 (EDLISKLPEVLLSQILSYLPTKDIVRTSVLSKRWKSVWLLIPGLDLD). LRR repeat units follow at residues 70–98 (YDTF…KLSI), 99–127 (QKNE…DVEF), 147–180 (CKTL…CLEE), 181–206 (NVYS…TIVK), 208–228 (DDNV…SVGY), 238–263 (YYYD…TFNN), and 344–373 (SVWL…VLET). In terms of domain architecture, FBD spans 384 to 435 (VERRVSSVPECLLSSLEFVEIKNRISVDDGALEVARYFVENSVNLQKVVLRL).

This Arabidopsis thaliana (Mouse-ear cress) protein is Putative F-box/FBD/LRR-repeat protein At5g22610.